The primary structure comprises 341 residues: Glyceraldehyde-3-phosphate dehydrogenase, cytosolic (341 aa).

NAD(+) is bound by residues 15–16 (RI), aspartate 37, and arginine 84. D-glyceraldehyde 3-phosphate is bound by residues 155–157 (SCT), threonine 186, 215–216 (TG), and arginine 238. Cysteine 156 acts as the Nucleophile in catalysis. Position 320 (asparagine 320) interacts with NAD(+).

It belongs to the glyceraldehyde-3-phosphate dehydrogenase family. In terms of assembly, homotetramer.

It is found in the cytoplasm. It carries out the reaction D-glyceraldehyde 3-phosphate + phosphate + NAD(+) = (2R)-3-phospho-glyceroyl phosphate + NADH + H(+). It functions in the pathway carbohydrate degradation; glycolysis; pyruvate from D-glyceraldehyde 3-phosphate: step 1/5. In terms of biological role, key enzyme in glycolysis that catalyzes the first step of the pathway by converting D-glyceraldehyde 3-phosphate (G3P) into 3-phospho-D-glyceroyl phosphate. Essential for the maintenance of cellular ATP levels and carbohydrate metabolism. The protein is Glyceraldehyde-3-phosphate dehydrogenase, cytosolic (GAPC) of Magnolia liliiflora (Mulan magnolia).